A 352-amino-acid chain; its full sequence is Leukotriene B4 receptor 1 (352 aa).

Topologically, residues 1–19 are extracellular; sequence MNTTSSAAPPSLGVEFISL. A glycan (N-linked (GlcNAc...) asparagine) is linked at asparagine 2. A helical transmembrane segment spans residues 20-42; the sequence is LAIILLSVALAVGLPGNSFVVWS. Residues 43–54 are Cytoplasmic-facing; the sequence is ILKRMQKRSVTA. Residues 55 to 75 traverse the membrane as a helical segment; sequence LMVLNLALADLAVLLTAPFFL. Over 76-91 the chain is Extracellular; sequence HFLAQGTWSFGLAGCR. A helical membrane pass occupies residues 92–113; it reads LCHYVCGVSMYASVLLITAMSL. At 114–138 the chain is on the cytoplasmic side; that stretch reads DRSLAVARPFVSQKLRTKAMARRVL. Residues 139-159 traverse the membrane as a helical segment; that stretch reads AGIWVLSFLLATPVLAYRTVV. The Extracellular segment spans residues 160–178; that stretch reads PWKTNMSLCFPRYPSEGHR. The N-linked (GlcNAc...) asparagine glycan is linked to asparagine 164. Residues 179–199 traverse the membrane as a helical segment; that stretch reads AFHLIFEAVTGFLLPFLAVVA. Over 200–221 the chain is Cytoplasmic; the sequence is SYSDIGRRLQARRFRRSRRTGR. A helical membrane pass occupies residues 222 to 242; that stretch reads LVVLIILTFAAFWLPYHVVNL. At 243–268 the chain is on the extracellular side; sequence AEAGRALAGQAAGLGLVGKRLSLARN. A helical transmembrane segment spans residues 269-289; it reads VLIALAFLSSSVNPVLYACAG. Residues 290–352 lie on the Cytoplasmic side of the membrane; it reads GGLLRSAGVG…SSPLKLNELN (63 aa). 2 stretches are compositionally biased toward polar residues: residues 310–326 and 338–352; these read SEAS…QTAR and ESLT…NELN. Residues 310 to 352 form a disordered region; the sequence is SEASSTRRGGSLGQTARSGPAALEPGPSESLTASSPLKLNELN.

Belongs to the G-protein coupled receptor 1 family. Post-translationally, phosphorylated by GRK6 upon leukotriene B4 binding; which promotes desensitization. As to expression, expressed at highest levels in heart, skeletal muscle and at lower levels in brain and liver. High level of expression in lymphoid tissues.

It is found in the cell membrane. Receptor for extracellular ATP &gt; UTP and ADP. The activity of this receptor is mediated by G proteins which activate a phosphatidylinositol-calcium second messenger system. May be the cardiac P2Y receptor involved in the regulation of cardiac muscle contraction through modulation of L-type calcium currents. Is a receptor for leukotriene B4, a potent chemoattractant involved in inflammation and immune response. This Homo sapiens (Human) protein is Leukotriene B4 receptor 1 (LTB4R).